The primary structure comprises 558 residues: Dihydroxy-acid dehydratase (558 aa).

Residue Asp81 participates in Mg(2+) binding. [2Fe-2S] cluster is bound at residue Cys122. Mg(2+) contacts are provided by Asp123 and Lys124. At Lys124 the chain carries N6-carboxylysine. Cys195 contacts [2Fe-2S] cluster. Glu447 is a Mg(2+) binding site. The active-site Proton acceptor is Ser473.

This sequence belongs to the IlvD/Edd family. As to quaternary structure, homodimer. Requires [2Fe-2S] cluster as cofactor. Mg(2+) serves as cofactor.

It carries out the reaction (2R)-2,3-dihydroxy-3-methylbutanoate = 3-methyl-2-oxobutanoate + H2O. The enzyme catalyses (2R,3R)-2,3-dihydroxy-3-methylpentanoate = (S)-3-methyl-2-oxopentanoate + H2O. It functions in the pathway amino-acid biosynthesis; L-isoleucine biosynthesis; L-isoleucine from 2-oxobutanoate: step 3/4. It participates in amino-acid biosynthesis; L-valine biosynthesis; L-valine from pyruvate: step 3/4. In terms of biological role, functions in the biosynthesis of branched-chain amino acids. Catalyzes the dehydration of (2R,3R)-2,3-dihydroxy-3-methylpentanoate (2,3-dihydroxy-3-methylvalerate) into 2-oxo-3-methylpentanoate (2-oxo-3-methylvalerate) and of (2R)-2,3-dihydroxy-3-methylbutanoate (2,3-dihydroxyisovalerate) into 2-oxo-3-methylbutanoate (2-oxoisovalerate), the penultimate precursor to L-isoleucine and L-valine, respectively. The sequence is that of Dihydroxy-acid dehydratase from Bacillus pumilus (strain SAFR-032).